Here is a 397-residue protein sequence, read N- to C-terminus: Putative F-box protein At1g26510 (397 aa).

A disordered region spans residues 1–23 (MRTRSKKTKTVNNNNDLQKSEEK). Residues 24 to 71 (QKFDQLPLDLEIEMFRRLPLKSVARFLTLSKSCATTIRSPSFITSFPS) enclose the F-box domain.

This Arabidopsis thaliana (Mouse-ear cress) protein is Putative F-box protein At1g26510.